The chain runs to 339 residues: tRNA N6-adenosine threonylcarbamoyltransferase (339 aa).

Fe cation is bound by residues His-115 and His-119. Substrate contacts are provided by residues 136-140 (LISGG), Asp-168, Glu-185, and Ser-265. Residue Asp-293 coordinates Fe cation.

This sequence belongs to the KAE1 / TsaD family. The cofactor is Fe(2+).

The protein resides in the cytoplasm. It catalyses the reaction L-threonylcarbamoyladenylate + adenosine(37) in tRNA = N(6)-L-threonylcarbamoyladenosine(37) in tRNA + AMP + H(+). Functionally, required for the formation of a threonylcarbamoyl group on adenosine at position 37 (t(6)A37) in tRNAs that read codons beginning with adenine. Is probably involved in the transfer of the threonylcarbamoyl moiety of threonylcarbamoyl-AMP (TC-AMP) to the N6 group of A37. The protein is tRNA N6-adenosine threonylcarbamoyltransferase of Pyrobaculum calidifontis (strain DSM 21063 / JCM 11548 / VA1).